Consider the following 729-residue polypeptide: Catalase-peroxidase (729 aa).

Positions 1-26 are disordered; it reads MTMDQKTDNAGKCPVAHTAPRGRSNR. The segment at residues 97–219 is a cross-link (tryptophyl-tyrosyl-methioninium (Trp-Tyr) (with M-245)); it reads WHSAGTYRIT…LAAVQMGLIY (123 aa). His98 (proton acceptor) is an active-site residue. The segment at residues 219–245 is a cross-link (tryptophyl-tyrosyl-methioninium (Tyr-Met) (with W-97)); sequence YVNPEGPNGNPDPVAAAHDIRETFARM. His260 lines the heme b pocket.

It belongs to the peroxidase family. Peroxidase/catalase subfamily. In terms of assembly, homodimer or homotetramer. Heme b is required as a cofactor. Post-translationally, formation of the three residue Trp-Tyr-Met cross-link is important for the catalase, but not the peroxidase activity of the enzyme.

It carries out the reaction H2O2 + AH2 = A + 2 H2O. The catalysed reaction is 2 H2O2 = O2 + 2 H2O. Functionally, bifunctional enzyme with both catalase and broad-spectrum peroxidase activity. The sequence is that of Catalase-peroxidase from Sinorhizobium medicae (strain WSM419) (Ensifer medicae).